A 542-amino-acid polypeptide reads, in one-letter code: Dihydropyrimidinase (542 aa).

Residues H62, H64, and K167 each coordinate Zn(2+). An N6-carboxylysine modification is found at K167. Position 172 (Y172) interacts with substrate. The Zn(2+) site is built by H199 and H255. Position 331 (S331) interacts with substrate. D358 contacts Zn(2+). Residue N392 participates in substrate binding.

The protein belongs to the metallo-dependent hydrolases superfamily. Hydantoinase/dihydropyrimidinase family. As to quaternary structure, homotetramer. Zn(2+) serves as cofactor. In terms of processing, carboxylation allows a single lysine to coordinate two zinc ions.

The catalysed reaction is 5,6-dihydrouracil + H2O = 3-(carbamoylamino)propanoate + H(+). In terms of biological role, catalyzes the second step of the reductive pyrimidine degradation, the reversible hydrolytic ring opening of dihydropyrimidines. Can catalyze the ring opening of 5,6-dihydrouracil to N-carbamyl-alanine and of 5,6-dihydrothymine to N-carbamyl-amino isobutyrate. This chain is Dihydropyrimidinase (PYD2), found in Lachancea kluyveri (strain ATCC 58438 / CBS 3082 / BCRC 21498 / NBRC 1685 / JCM 7257 / NCYC 543 / NRRL Y-12651) (Yeast).